We begin with the raw amino-acid sequence, 170 residues long: Lipoprotein signal peptidase (170 aa).

Transmembrane regions (helical) follow at residues isoleucine 13–isoleucine 33, leucine 72–glutamate 92, and isoleucine 96–isoleucine 113. Catalysis depends on residues aspartate 124 and aspartate 146. Residues phenylalanine 142–phenylalanine 162 form a helical membrane-spanning segment.

It belongs to the peptidase A8 family.

Its subcellular location is the cell inner membrane. The catalysed reaction is Release of signal peptides from bacterial membrane prolipoproteins. Hydrolyzes -Xaa-Yaa-Zaa-|-(S,diacylglyceryl)Cys-, in which Xaa is hydrophobic (preferably Leu), and Yaa (Ala or Ser) and Zaa (Gly or Ala) have small, neutral side chains.. It participates in protein modification; lipoprotein biosynthesis (signal peptide cleavage). Functionally, this protein specifically catalyzes the removal of signal peptides from prolipoproteins. This is Lipoprotein signal peptidase from Borrelia turicatae (strain 91E135).